The primary structure comprises 465 residues: ATP synthase subunit beta (465 aa).

152–159 (GGAGVGKT) lines the ATP pocket.

Belongs to the ATPase alpha/beta chains family. In terms of assembly, F-type ATPases have 2 components, CF(1) - the catalytic core - and CF(0) - the membrane proton channel. CF(1) has five subunits: alpha(3), beta(3), gamma(1), delta(1), epsilon(1). CF(0) has three main subunits: a(1), b(2) and c(9-12). The alpha and beta chains form an alternating ring which encloses part of the gamma chain. CF(1) is attached to CF(0) by a central stalk formed by the gamma and epsilon chains, while a peripheral stalk is formed by the delta and b chains.

The protein localises to the cell membrane. The enzyme catalyses ATP + H2O + 4 H(+)(in) = ADP + phosphate + 5 H(+)(out). Produces ATP from ADP in the presence of a proton gradient across the membrane. The catalytic sites are hosted primarily by the beta subunits. This Ruminiclostridium cellulolyticum (strain ATCC 35319 / DSM 5812 / JCM 6584 / H10) (Clostridium cellulolyticum) protein is ATP synthase subunit beta.